Here is a 951-residue protein sequence, read N- to C-terminus: MPGPLGLLCFLALGLLGSAGPSGAAPPLCAAPCSCDGDRRVDCSGKGLTAVPEGLSAFTQALDISMNNITQLPEDAFKNFPFLEELQLAGNDLSFIHPKALSGLKELKVLTLQNNQLKTVPSEAIRGLSALQSLRLDANHITSVPEDSFEGLVQLRHLWLDDNSLTEVPVHPLSNLPTLQALTLALNKISSIPDFAFTNLSSLVVLHLHNNKIRSLSQHCFDGLDNLETLDLNYNNLGEFPQAIKALPSLKELGFHSNSISVIPDGAFDGNPLLRTIHLYDNPLSFVGNSAFHNLSDLHSLVIRGASMVQQFPNLTGTVHLESLTLTGTKISSIPNNLCQEQKMLRTLDLSYNNIRDLPSFNGCHALEEISLQRNQIYQIKEGTFQGLISLRILDLSRNLIHEIHSRAFATLGPITNLDVSFNELTSFPTEGLNGLNQLKLVGNFKLKEALAAKDFVNLRSLSVPYAYQCCAFWGCDSYANLNTEDNSLQDHSVAQEKGTADAANVTSTLENEEHSQIIIHCTPSTGAFKPCEYLLGSWMIRLTVWFIFLVALFFNLLVILTTFASCTSLPSSKLFIGLISVSNLFMGIYTGILTFLDAVSWGRFAEFGIWWETGSGCKVAGFLAVFSSESAIFLLMLATVERSLSAKDIMKNGKSNHLKQFRVAALLAFLGATVAGCFPLFHRGEYSASPLCLPFPTGETPSLGFTVTLVLLNSLAFLLMAVIYTKLYCNLEKEDLSENSQSSMIKHVAWLIFTNCIFFCPVAFFSFAPLITAISISPEIMKSVTLIFFPLPACLNPVLYVFFNPKFKEDWKLLKRRVTKKSGSVSVSISSQGGCLEQDFYYDCGMYSHLQGNLTVCDCCESFLLTKPVSCKHLIKSHSCPALAVASCQRPEGYWSDCGTQSAHSDYADEEDSFVSDSSDQVQACGRACFYQSRGFPLVRYAYNLPRVKD.

The N-terminal stretch at 1–24 (MPGPLGLLCFLALGLLGSAGPSGA) is a signal peptide. In terms of domain architecture, LRRNT spans 25 to 57 (APPLCAAPCSCDGDRRVDCSGKGLTAVPEGLSA). The Extracellular portion of the chain corresponds to 25-544 (APPLCAAPCS…LLGSWMIRLT (520 aa)). 2 cysteine pairs are disulfide-bonded: cysteine 29–cysteine 35 and cysteine 33–cysteine 43. LRR repeat units follow at residues 58-79 (FTQA…AFKN), 82-103 (FLEE…ALSG), 106-127 (ELKV…AIRG), 130-151 (ALQS…SFEG), 154-177 (QLRH…SNLP), 178-199 (TLQA…AFTN), 202-223 (SLVV…CFDG), 226-247 (NLET…IKAL), 249-270 (SLKE…AFDG), and 273-294 (LLRT…AFHN). The N-linked (GlcNAc...) asparagine glycan is linked to asparagine 68. The N-linked (GlcNAc...) asparagine glycan is linked to asparagine 199. Asparagine 294 and asparagine 314 each carry an N-linked (GlcNAc...) asparagine glycan. 5 LRR repeats span residues 320–341 (HLES…LCQE), 344–365 (MLRT…NGCH), 366–387 (ALEE…TFQG), 390–411 (SLRI…AFAT), and 414–435 (PITN…GLNG). Cysteine 339 and cysteine 364 are joined by a disulfide. 2 cysteine pairs are disulfide-bonded: cysteine 470–cysteine 522 and cysteine 471–cysteine 476. Asparagine 505 carries N-linked (GlcNAc...) asparagine glycosylation. The chain crosses the membrane as a helical span at residues 545-565 (VWFIFLVALFFNLLVILTTFA). The Cytoplasmic segment spans residues 566-575 (SCTSLPSSKL). Residues 576-596 (FIGLISVSNLFMGIYTGILTF) traverse the membrane as a helical segment. Topologically, residues 597 to 620 (LDAVSWGRFAEFGIWWETGSGCKV) are extracellular. Cysteine 618 and cysteine 693 are joined by a disulfide. Residues 621 to 641 (AGFLAVFSSESAIFLLMLATV) form a helical membrane-spanning segment. Topologically, residues 642-661 (ERSLSAKDIMKNGKSNHLKQ) are cytoplasmic. Residues 662–682 (FRVAALLAFLGATVAGCFPLF) form a helical membrane-spanning segment. Residues 683 to 703 (HRGEYSASPLCLPFPTGETPS) are Extracellular-facing. The chain crosses the membrane as a helical span at residues 704-724 (LGFTVTLVLLNSLAFLLMAVI). At 725-756 (YTKLYCNLEKEDLSENSQSSMIKHVAWLIFTN) the chain is on the cytoplasmic side. The helical transmembrane segment at 757-777 (CIFFCPVAFFSFAPLITAISI) threads the bilayer. Residues 778-783 (SPEIMK) lie on the Extracellular side of the membrane. Residues 784-804 (SVTLIFFPLPACLNPVLYVFF) traverse the membrane as a helical segment. Residues 805–951 (NPKFKEDWKL…YAYNLPRVKD (147 aa)) lie on the Cytoplasmic side of the membrane. Residue serine 920 is modified to Phosphoserine.

Belongs to the G-protein coupled receptor 1 family. In terms of tissue distribution, expressed in multiple steroidogenic tissues: placenta, ovary, testis and adrenal. Expressed also in spinal cord, thyroid, stomach, trachea, heart, pancreas, kidney, prostate and spleen.

Its subcellular location is the cell membrane. Its function is as follows. Receptor for R-spondins that potentiates the canonical Wnt signaling pathway and is involved in the formation of various organs. Upon binding to R-spondins (RSPO1, RSPO2, RSPO3 or RSPO4), associates with phosphorylated LRP6 and frizzled receptors that are activated by extracellular Wnt receptors, triggering the canonical Wnt signaling pathway to increase expression of target genes. In contrast to classical G-protein coupled receptors, does not activate heterotrimeric G-proteins to transduce the signal. Its function as activator of the Wnt signaling pathway is required for the development of various organs, including liver, kidney, intestine, bone, reproductive tract and eye. May also act as a receptor for norrin (NDP), such results however require additional confirmation in vivo. Required during spermatogenesis to activate the Wnt signaling pathway in peritubular myoid cells. Required for the maintenance of intestinal stem cells and Paneth cell differentiation in postnatal intestinal crypts. Acts as a regulator of bone formation and remodeling. Involved in kidney development; required for maintaining the ureteric bud in an undifferentiated state. Involved in the development of the anterior segment of the eye. Required during erythropoiesis. Also acts as a negative regulator of innate immunity by inhibiting TLR2/TLR4 associated pattern-recognition and pro-inflammatory cytokine production. Plays an important role in regulating the circadian rhythms of plasma lipids, partially through regulating the rhythmic expression of MTTP. Required for proper development of GnRH neurons (gonadotropin-releasing hormone expressing neurons) that control the release of reproductive hormones from the pituitary gland. This is Leucine-rich repeat-containing G-protein coupled receptor 4 (LGR4) from Homo sapiens (Human).